The sequence spans 169 residues: 2-C-methyl-D-erythritol 2,4-cyclodiphosphate synthase (169 aa).

The a divalent metal cation site is built by D13 and H15. 4-CDP-2-C-methyl-D-erythritol 2-phosphate contacts are provided by residues 13-15 and 39-40; these read DVH and HS. H47 is a binding site for a divalent metal cation. 4-CDP-2-C-methyl-D-erythritol 2-phosphate contacts are provided by residues 61–63, 66–70, F144, and R147; these read DIG and FPDTD.

The protein belongs to the IspF family. As to quaternary structure, homotrimer. It depends on a divalent metal cation as a cofactor.

It carries out the reaction 4-CDP-2-C-methyl-D-erythritol 2-phosphate = 2-C-methyl-D-erythritol 2,4-cyclic diphosphate + CMP. It participates in isoprenoid biosynthesis; isopentenyl diphosphate biosynthesis via DXP pathway; isopentenyl diphosphate from 1-deoxy-D-xylulose 5-phosphate: step 4/6. Involved in the biosynthesis of isopentenyl diphosphate (IPP) and dimethylallyl diphosphate (DMAPP), two major building blocks of isoprenoid compounds. Catalyzes the conversion of 4-diphosphocytidyl-2-C-methyl-D-erythritol 2-phosphate (CDP-ME2P) to 2-C-methyl-D-erythritol 2,4-cyclodiphosphate (ME-CPP) with a corresponding release of cytidine 5-monophosphate (CMP). The chain is 2-C-methyl-D-erythritol 2,4-cyclodiphosphate synthase from Cupriavidus necator (strain ATCC 17699 / DSM 428 / KCTC 22496 / NCIMB 10442 / H16 / Stanier 337) (Ralstonia eutropha).